The following is a 111-amino-acid chain: UPF0060 membrane protein CPR_1507 (111 aa).

The next 4 helical transmembrane spans lie at 7-27, 33-53, 60-80, and 85-105; these read IFYF…IWLW, SLIY…IPTL, FGRV…LCGW, and IIPD…VLII.

This sequence belongs to the UPF0060 family.

The protein resides in the cell membrane. This chain is UPF0060 membrane protein CPR_1507, found in Clostridium perfringens (strain SM101 / Type A).